Here is a 318-residue protein sequence, read N- to C-terminus: Lymphatic vessel endothelial hyaluronic acid receptor 1 (318 aa).

A signal peptide spans 1–23 (MLQHTSLVLLLASIWTTRHPVQG). Topologically, residues 24–234 (ADLVQDLSIS…EAAGFGGVPT (211 aa)) are extracellular. A Link domain is found at 39–129 (GVALVGRNKN…SQKFKAYCHN (91 aa)). Asn52 carries N-linked (GlcNAc...) asparagine glycosylation. 2 disulfides stabilise this stretch: Cys60-Cys127 and Cys84-Cys105. Asn129 carries N-linked (GlcNAc...) asparagine glycosylation. A helical membrane pass occupies residues 235–255 (ALLVLALLFFGAAAVLAVCYV). The Cytoplasmic portion of the chain corresponds to 256–318 (KRYVKAFPFT…TTVRCLEAEV (63 aa)). Over residues 284-305 (ADDVNANEESKKTIKNPEEAKS) the composition is skewed to basic and acidic residues. The disordered stretch occupies residues 284–318 (ADDVNANEESKKTIKNPEEAKSPPKTTVRCLEAEV).

As to quaternary structure, homodimer; disulfide-linked. Interacts with PDGFB and IGFBP3. Forms a transient ternary complex with PDGFB and PDGFRB in TGN. Post-translationally, O-glycosylated.

The protein localises to the membrane. Ligand-specific transporter trafficking between intracellular organelles (TGN) and the plasma membrane. Plays a role in autocrine regulation of cell growth mediated by growth regulators containing cell surface retention sequence binding (CRS). May act as a hyaluronan (HA) transporter, either mediating its uptake for catabolism within lymphatic endothelial cells themselves, or its transport into the lumen of afferent lymphatic vessels for subsequent re-uptake and degradation in lymph nodes. Binds to pericelluar hyaluronan matrices deposited on the surface of leukocytes and facilitates cell adhesion and migration through lymphatic endothelium. In Mus musculus (Mouse), this protein is Lymphatic vessel endothelial hyaluronic acid receptor 1 (Lyve1).